Consider the following 108-residue polypeptide: Hydrogenase expression/formation protein HupN (108 aa).

Residues 88–108 (REPQLPPHLQAQLPPKEPNSP) form a disordered region.

The protein belongs to the HupF/HypC family.

This chain is Hydrogenase expression/formation protein HupN (hupN), found in Azotobacter chroococcum mcd 1.